Here is a 446-residue protein sequence, read N- to C-terminus: Tubulin beta chain (446 aa).

8 residues coordinate GTP: Gln11, Glu69, Ser138, Gly142, Thr143, Gly144, Asn204, and Asn226. Glu69 provides a ligand contact to Mg(2+). The tract at residues 425–446 (YQEASISEGEEEYPEEVSNEEE) is disordered. Over residues 432 to 446 (EGEEEYPEEVSNEEE) the composition is skewed to acidic residues.

This sequence belongs to the tubulin family. As to quaternary structure, dimer of alpha and beta chains. A typical microtubule is a hollow water-filled tube with an outer diameter of 25 nm and an inner diameter of 15 nM. Alpha-beta heterodimers associate head-to-tail to form protofilaments running lengthwise along the microtubule wall with the beta-tubulin subunit facing the microtubule plus end conferring a structural polarity. Microtubules usually have 13 protofilaments but different protofilament numbers can be found in some organisms and specialized cells. It depends on Mg(2+) as a cofactor.

It is found in the cytoplasm. Its subcellular location is the cytoskeleton. In terms of biological role, tubulin is the major constituent of microtubules, a cylinder consisting of laterally associated linear protofilaments composed of alpha- and beta-tubulin heterodimers. Microtubules grow by the addition of GTP-tubulin dimers to the microtubule end, where a stabilizing cap forms. Below the cap, tubulin dimers are in GDP-bound state, owing to GTPase activity of alpha-tubulin. The polypeptide is Tubulin beta chain (TUB2) (Blumeria hordei (Barley powdery mildew)).